Reading from the N-terminus, the 176-residue chain is Large ribosomal subunit protein uL6 (176 aa).

This sequence belongs to the universal ribosomal protein uL6 family. As to quaternary structure, part of the 50S ribosomal subunit.

This protein binds to the 23S rRNA, and is important in its secondary structure. It is located near the subunit interface in the base of the L7/L12 stalk, and near the tRNA binding site of the peptidyltransferase center. This Burkholderia mallei (strain NCTC 10247) protein is Large ribosomal subunit protein uL6.